We begin with the raw amino-acid sequence, 356 residues long: S-adenosylmethionine:tRNA ribosyltransferase-isomerase (356 aa).

Belongs to the QueA family. As to quaternary structure, monomer.

The protein localises to the cytoplasm. It carries out the reaction 7-aminomethyl-7-carbaguanosine(34) in tRNA + S-adenosyl-L-methionine = epoxyqueuosine(34) in tRNA + adenine + L-methionine + 2 H(+). Its pathway is tRNA modification; tRNA-queuosine biosynthesis. Transfers and isomerizes the ribose moiety from AdoMet to the 7-aminomethyl group of 7-deazaguanine (preQ1-tRNA) to give epoxyqueuosine (oQ-tRNA). This is S-adenosylmethionine:tRNA ribosyltransferase-isomerase from Chromohalobacter salexigens (strain ATCC BAA-138 / DSM 3043 / CIP 106854 / NCIMB 13768 / 1H11).